We begin with the raw amino-acid sequence, 191 residues long: Adenylate kinase (191 aa).

12-17 provides a ligand contact to ATP; it reads GSGKTT. Residues 33-62 are NMP; it reads STGDLLRAEVASGSELGKLIDSFISKGNLV. Residues Thr34, Arg39, 60 to 62, 87 to 90, and Gln94 each bind AMP; these read NLV and GYPR. The segment at 129–135 is LID; the sequence is GRARGAD. Arg130 lines the ATP pocket. Residues Arg132 and Arg144 each coordinate AMP. ATP is bound at residue Arg172.

This sequence belongs to the adenylate kinase family. In terms of assembly, monomer.

Its subcellular location is the cytoplasm. It catalyses the reaction AMP + ATP = 2 ADP. It functions in the pathway purine metabolism; AMP biosynthesis via salvage pathway; AMP from ADP: step 1/1. Catalyzes the reversible transfer of the terminal phosphate group between ATP and AMP. Plays an important role in cellular energy homeostasis and in adenine nucleotide metabolism. The chain is Adenylate kinase from Campylobacter fetus subsp. fetus (strain 82-40).